A 217-amino-acid polypeptide reads, in one-letter code: Thiopurine S-methyltransferase (217 aa).

The S-adenosyl-L-methionine site is built by Trp-10, Leu-45, Glu-66, and Arg-123.

Belongs to the class I-like SAM-binding methyltransferase superfamily. TPMT family.

The protein resides in the cytoplasm. The enzyme catalyses S-adenosyl-L-methionine + a thiopurine = S-adenosyl-L-homocysteine + a thiopurine S-methylether.. The protein is Thiopurine S-methyltransferase of Pseudomonas fluorescens (strain Pf0-1).